We begin with the raw amino-acid sequence, 583 residues long: Mitogen-activated protein kinase 4 (583 aa).

In terms of domain architecture, Protein kinase spans 20 to 312 (FIDFQPLGFG…AEMGLQHPYM (293 aa)). ATP contacts are provided by residues 26–34 (LGFGVNGLV) and Lys-49. Asp-149 acts as the Proton acceptor in catalysis. Phosphoserine; by PAK1, PAK2 and PAK3 is present on Ser-186. The SEG motif motif lies at 186–188 (SEG). Positions 328–333 (FRIEDE) match the FRIEDE motif motif. Basic and acidic residues-rich tracts occupy residues 366–379 (DRCQDASEVQRDPR) and 391–410 (VDPRKDSQSSSERFLEQSHS). The tract at residues 366-410 (DRCQDASEVQRDPRAGSTPLAEDVQVDPRKDSQSSSERFLEQSHS) is disordered. The residue at position 430 (Ser-430) is a Phosphoserine. The segment at 495–531 (STQSGSERASPPPDAPEPRLSASPPGHPTPIDGGASP) is disordered.

Belongs to the protein kinase superfamily. CMGC Ser/Thr protein kinase family. MAP kinase subfamily. In terms of assembly, homodimer. Heterodimer with ERK3/MAPK6. Interacts with (via FRIEDE motif) MAPKAPK5. Mg(2+) serves as cofactor. Phosphorylated at Ser-186 by PAK1, PAK2 and PAK3 resulting in catalytic activation. Phosphorylated by MAPKAPK5 at other sites.

The protein resides in the cytoplasm. It localises to the nucleus. It catalyses the reaction L-seryl-[protein] + ATP = O-phospho-L-seryl-[protein] + ADP + H(+). The catalysed reaction is L-threonyl-[protein] + ATP = O-phospho-L-threonyl-[protein] + ADP + H(+). Its activity is regulated as follows. Activated by phosphorylation at Ser-186. Its function is as follows. Atypical MAPK protein. Phosphorylates microtubule-associated protein 2 (MAP2) and MAPKAPK5. The precise role of the complex formed with MAPKAPK5 is still unclear, but the complex follows a complex set of phosphorylation events: upon interaction with atypical MAPKAPK5, ERK4/MAPK4 is phosphorylated at Ser-186 and then mediates phosphorylation and activation of MAPKAPK5, which in turn phosphorylates ERK4/MAPK4. May promote entry in the cell cycle. The polypeptide is Mitogen-activated protein kinase 4 (Mapk4) (Mus musculus (Mouse)).